The primary structure comprises 25 residues: Aurein-5.1 (25 aa).

Belongs to the frog skin active peptide (FSAP) family. Aurein subfamily. As to expression, expressed by the skin dorsal glands.

It localises to the secreted. Its function is as follows. Has no antimicrobial or anticancer activity. This chain is Aurein-5.1, found in Ranoidea aurea (Green and golden bell frog).